A 146-amino-acid chain; its full sequence is Actin-depolymerizing factor 6 (146 aa).

S13 carries the post-translational modification Phosphoserine. In terms of domain architecture, ADF-H spans 14–146 (GMGVADESKT…DLEVLRERAN (133 aa)).

This sequence belongs to the actin-binding proteins ADF family. Post-translationally, phosphorylated. In terms of tissue distribution, expressed in vascular tissues of all organs.

The protein localises to the cytoplasm. It localises to the cytoskeleton. In terms of biological role, actin-depolymerizing protein. Severs actin filaments (F-actin) and binds to actin monomers. This is Actin-depolymerizing factor 6 (ADF6) from Arabidopsis thaliana (Mouse-ear cress).